The chain runs to 300 residues: Fatty acid hydroxylase uhd1 (300 aa).

NADP(+)-binding positions include 14 to 20 (GANGFVG), arginine 39, 63 to 64 (DL), 83 to 85 (VAS), tyrosine 156, lysine 160, 183 to 186 (PVYI), and serine 199. The Proton donor role is filled by lysine 160.

Belongs to the NAD(P)-dependent epimerase/dehydratase family. Dihydroflavonol-4-reductase subfamily.

Its pathway is secondary metabolite biosynthesis. Functionally, fatty acid hydroxylase; part of the gene cluster that mediates the biosynthesis of the glycolipid biosurfactant ustilagic acid (UA). UA is a secreted cellobiose glycolipid that is toxic for many microorganisms and confers biocontrol activity to U.maydis. UA consists of 15,16-dihydroxypalmitic or 2,15,16-trihydroxypalmitic acid, which is O-glycosidically linked to cellobiose at its terminal hydroxyl group. In addition, the cellobiose moiety is acetylated and acylated with a short-chain hydroxy fatty acid. UA biosynthesis starts with omega-hydroxylation of palmitic acid catalyzed by the cytochrome P450 monooxygenase cyp1. Terminal hydroxylation of palmitic acid precedes subterminal hydroxylation catalyzed by the cytochrome P450 monooxygenase cyp2. Sequential glucosylation of the hydroxy fatty acid is probably catalyzed by the glycosyltransferase ugt1. The cellobiose lipid is further decorated by acetylation of the proximal glucose residue and by acylation with a short-chain beta-hydroxy fatty acid at the distal glucose residue. The acyltransferase uat1 may be a good candidate for catalyzing either acetylation or acylation of the cellobiose lipid. The fatty acid synthase fas2 may be involved in synthesis of the carbon backbone of the short-chain beta-hydroxy fatty acid esterified to the cellobiose disaccharide. The secreted UA consists of a mixture of both alpha-hydroxylated and non-hydroxylated glycolipids; therefore, alpha-hydroxylation of the long-chain fatty, catalyzed by the fatty acid hydroxylase ahd1, occurs late in UA biosynthesis and may be the last step before secretion. The sequence is that of Fatty acid hydroxylase uhd1 from Mycosarcoma maydis (Corn smut fungus).